The sequence spans 281 residues: Diaminopimelate epimerase (281 aa).

Substrate-binding residues include asparagine 13, glutamine 51, and asparagine 70. The Proton donor role is filled by cysteine 79. Substrate-binding positions include 80–81 (GN), asparagine 163, asparagine 196, and 214–215 (ER). Cysteine 223 (proton acceptor) is an active-site residue. Substrate is bound at residue 224–225 (GS).

It belongs to the diaminopimelate epimerase family. Homodimer.

Its subcellular location is the cytoplasm. The enzyme catalyses (2S,6S)-2,6-diaminopimelate = meso-2,6-diaminopimelate. Its pathway is amino-acid biosynthesis; L-lysine biosynthesis via DAP pathway; DL-2,6-diaminopimelate from LL-2,6-diaminopimelate: step 1/1. In terms of biological role, catalyzes the stereoinversion of LL-2,6-diaminopimelate (L,L-DAP) to meso-diaminopimelate (meso-DAP), a precursor of L-lysine and an essential component of the bacterial peptidoglycan. This chain is Diaminopimelate epimerase, found in Alcanivorax borkumensis (strain ATCC 700651 / DSM 11573 / NCIMB 13689 / SK2).